Reading from the N-terminus, the 541-residue chain is Protein yellow (541 aa).

The signal sequence occupies residues 1–21 (MFQDKGWILVTLITLVTPSWA). Residues Asn144 and Asn215 are each glycosylated (N-linked (GlcNAc...) asparagine). The interval 443–463 (QKPQTSWASSPPPPSRTYLPA) is disordered.

This sequence belongs to the major royal jelly protein family.

It localises to the secreted. In terms of biological role, controls the pigmentation pattern of the adult cuticle and larval mouth parts. The polypeptide is Protein yellow (y) (Drosophila melanogaster (Fruit fly)).